Reading from the N-terminus, the 431-residue chain is Histidinol dehydrogenase (431 aa).

Residues Tyr-129, Gln-191, and Asn-214 each contribute to the NAD(+) site. Substrate contacts are provided by Ser-237, Gln-259, and His-262. 2 residues coordinate Zn(2+): Gln-259 and His-262. Residues Glu-327 and His-328 each act as proton acceptor in the active site. The substrate site is built by His-328, Asp-361, Glu-415, and His-420. Residue Asp-361 coordinates Zn(2+). His-420 is a binding site for Zn(2+).

The protein belongs to the histidinol dehydrogenase family. Requires Zn(2+) as cofactor.

The enzyme catalyses L-histidinol + 2 NAD(+) + H2O = L-histidine + 2 NADH + 3 H(+). It participates in amino-acid biosynthesis; L-histidine biosynthesis; L-histidine from 5-phospho-alpha-D-ribose 1-diphosphate: step 9/9. Catalyzes the sequential NAD-dependent oxidations of L-histidinol to L-histidinaldehyde and then to L-histidine. The protein is Histidinol dehydrogenase (hisD) of Lactococcus lactis subsp. lactis (strain IL1403) (Streptococcus lactis).